We begin with the raw amino-acid sequence, 654 residues long: Fructose-1,6-bisphosphatase class 3 (654 aa).

Belongs to the FBPase class 3 family. Mn(2+) is required as a cofactor.

It catalyses the reaction beta-D-fructose 1,6-bisphosphate + H2O = beta-D-fructose 6-phosphate + phosphate. The protein operates within carbohydrate biosynthesis; gluconeogenesis. This chain is Fructose-1,6-bisphosphatase class 3, found in Staphylococcus haemolyticus (strain JCSC1435).